The chain runs to 467 residues: Ribulose bisphosphate carboxylase large chain (467 aa).

Substrate is bound by residues residue 106 and threonine 156. Catalysis depends on lysine 158, which acts as the Proton acceptor. Lysine 160 is a substrate binding site. Residues lysine 184, aspartate 186, and glutamate 187 each contribute to the Mg(2+) site. An N6-carboxylysine modification is found at lysine 184. The active-site Proton acceptor is the histidine 276. 3 residues coordinate substrate: arginine 277, histidine 309, and serine 361.

The protein belongs to the RuBisCO large chain family. Type I subfamily. In terms of assembly, heterohexadecamer of 8 large chains and 8 small chains. Mg(2+) is required as a cofactor.

The protein resides in the plastid. It localises to the chloroplast. It catalyses the reaction 2 (2R)-3-phosphoglycerate + 2 H(+) = D-ribulose 1,5-bisphosphate + CO2 + H2O. The catalysed reaction is D-ribulose 1,5-bisphosphate + O2 = 2-phosphoglycolate + (2R)-3-phosphoglycerate + 2 H(+). RuBisCO catalyzes two reactions: the carboxylation of D-ribulose 1,5-bisphosphate, the primary event in carbon dioxide fixation, as well as the oxidative fragmentation of the pentose substrate in the photorespiration process. Both reactions occur simultaneously and in competition at the same active site. In Chondrus crispus (Carrageen Irish moss), this protein is Ribulose bisphosphate carboxylase large chain (rbcL).